A 228-amino-acid polypeptide reads, in one-letter code: 7-cyano-7-deazaguanine synthase (228 aa).

Phenylalanine 10–alanine 20 lines the ATP pocket. Positions 190, 205, 208, and 211 each coordinate Zn(2+).

It belongs to the QueC family. It depends on Zn(2+) as a cofactor.

It catalyses the reaction 7-carboxy-7-deazaguanine + NH4(+) + ATP = 7-cyano-7-deazaguanine + ADP + phosphate + H2O + H(+). It functions in the pathway purine metabolism; 7-cyano-7-deazaguanine biosynthesis. Catalyzes the ATP-dependent conversion of 7-carboxy-7-deazaguanine (CDG) to 7-cyano-7-deazaguanine (preQ(0)). The protein is 7-cyano-7-deazaguanine synthase of Helicobacter pylori (strain HPAG1).